A 47-amino-acid polypeptide reads, in one-letter code: Large ribosomal subunit protein bL34 (47 aa).

The segment at Met1–Pro47 is disordered. Positions Ile10 to Pro47 are enriched in basic residues.

It belongs to the bacterial ribosomal protein bL34 family.

The sequence is that of Large ribosomal subunit protein bL34 (rpmH) from Aquifex aeolicus (strain VF5).